We begin with the raw amino-acid sequence, 511 residues long: MVTIRADEIRNIIRERIEQYNREVKILNKGTVLQVGDAIARIHGLYEVMAGELVEFEEGTIGIALNLESNNVGVVLMGDGLMIKEGSSVKATGRIAQIPVGEAYLGRVINAQANPIDGRGKISSSAFRLIEASAPGIISRRSIYEPLQTGLIAIDSMIPIGRGQRELIIGDRQTGKTAVATDTIINQQGQNVICVYVAIGQKASSVAQVVTTLQERGAMEYTIVVAETADSPATLQYLAPYTGAALAEYFMYSERHTLIIYDDLSKQAQAYRQMSLLLRRPPGREAYPGDVFYLHSRLLERAAKLSSKLGEGSMTALPIVETQSGDVSAYIPTNVISITDGQIFLSVDLFNAGIRPAINVGISVSRVGSAAQIKAMKKVAGKLKLELAQFAELEAFAQFASDLDKTSQNQLARGQRLRELLKQSQSAPLTVAEQIMTIYTGINGYLDSLPLGQVRKFLIELCTYLKTNKPRFQEILSSTKTFTEEAEDLLKEAIRDQMDRFLLKEQAEINF.

170-177 (GDRQTGKT) serves as a coordination point for ATP.

Belongs to the ATPase alpha/beta chains family. In terms of assembly, F-type ATPases have 2 components, CF(1) - the catalytic core - and CF(0) - the membrane proton channel. CF(1) has five subunits: alpha(3), beta(3), gamma(1), delta(1), epsilon(1). CF(0) has four main subunits: a, b, b' and c.

The protein resides in the plastid membrane. The enzyme catalyses ATP + H2O + 4 H(+)(in) = ADP + phosphate + 5 H(+)(out). In terms of biological role, produces ATP from ADP in the presence of a proton gradient across the membrane. The alpha chain is a regulatory subunit. The protein is ATP synthase subunit alpha, plastid of Cuscuta reflexa (Southern Asian dodder).